The primary structure comprises 325 residues: Coiled-coil domain-containing protein 160 (325 aa).

Disordered regions lie at residues 18–45 and 81–123; these read SAQDVLEETSEPESSSEQTTADSSKGME and ENKR…CSTD. Residues 81-91 show a composition bias toward basic and acidic residues; sequence ENKRNISKNET. The segment covering 92–123 has biased composition (polar residues); sequence DTNSASYESSNVDVTTEESFNSTEDNSTCSTD. Residues 144 to 288 adopt a coiled-coil conformation; that stretch reads KLCLNLLNEE…SVIKNELRTE (145 aa).

Belongs to the CCDC160 family.

This Homo sapiens (Human) protein is Coiled-coil domain-containing protein 160 (CCDC160).